The primary structure comprises 385 residues: Probable thioesterase PNKD (385 aa).

Residues 32–58 form a disordered region; the sequence is KASHNRTRALQSHSSPEGKEEPEPLSP. Residues H172, H174, D176, H177, H229, D253, and H291 each contribute to the Zn(2+) site.

This sequence belongs to the metallo-beta-lactamase superfamily. Glyoxalase II family. Isoform 2 interacts with the sarcomeric proteins, MRLC2, MYOM1 and ENO3. Requires Zn(2+) as cofactor. In terms of processing, undergoes cleavage at the N-terminus. As to expression, isoform 1 is only expressed in the brain. Isoform 2 is ubiquitously detected with highest expression in skeletal muscle and detected in myocardial myofibrils.

The protein localises to the cell membrane. It is found in the mitochondrion. Its subcellular location is the cytoplasm. The protein resides in the golgi apparatus. It localises to the endoplasmic reticulum. The catalysed reaction is a thioester + H2O = a thiol + a carboxylate + H(+). Functionally, probable thioesterase that may play a role in cellular detoxification processes; it likely acts on a yet-unknown alpha-hydroxythioester substrate. In vitro, it is able to catalyze the hydrolysis of S-D-lactoyl-glutathione to form glutathione and D-lactic acid at very low rate, though this reaction is not physiologically relevant in vivo. In Homo sapiens (Human), this protein is Probable thioesterase PNKD (PNKD).